We begin with the raw amino-acid sequence, 344 residues long: Adenosine kinase (344 aa).

Residue Asp-298 is part of the active site.

This sequence belongs to the carbohydrate kinase PfkB family. Mg(2+) serves as cofactor.

The catalysed reaction is adenosine + ATP = AMP + ADP + H(+). It functions in the pathway purine metabolism; AMP biosynthesis via salvage pathway; AMP from adenosine: step 1/1. The protein is Adenosine kinase (ADK) of Schizophyllum commune (Split gill fungus).